Consider the following 66-residue polypeptide: Large ribosomal subunit protein bL31 (66 aa).

Positions 16, 18, 36, and 39 each coordinate Zn(2+).

Belongs to the bacterial ribosomal protein bL31 family. Type A subfamily. In terms of assembly, part of the 50S ribosomal subunit. Zn(2+) serves as cofactor.

Binds the 23S rRNA. The polypeptide is Large ribosomal subunit protein bL31 (Geobacillus sp. (strain WCH70)).